We begin with the raw amino-acid sequence, 62 residues long: Photosystem II reaction center protein Z (62 aa).

The next 2 helical transmembrane spans lie at 8-28 (AVFA…VVFA) and 41-61 (FSGT…NSLI).

It belongs to the PsbZ family. PSII is composed of 1 copy each of membrane proteins PsbA, PsbB, PsbC, PsbD, PsbE, PsbF, PsbH, PsbI, PsbJ, PsbK, PsbL, PsbM, PsbT, PsbY, PsbZ, Psb30/Ycf12, at least 3 peripheral proteins of the oxygen-evolving complex and a large number of cofactors. It forms dimeric complexes.

The protein localises to the plastid. It is found in the chloroplast thylakoid membrane. In terms of biological role, may control the interaction of photosystem II (PSII) cores with the light-harvesting antenna, regulates electron flow through the 2 photosystem reaction centers. PSII is a light-driven water plastoquinone oxidoreductase, using light energy to abstract electrons from H(2)O, generating a proton gradient subsequently used for ATP formation. The polypeptide is Photosystem II reaction center protein Z (Lotus japonicus (Lotus corniculatus var. japonicus)).